The primary structure comprises 138 residues: Ribonuclease VapC21 (138 aa).

A PINc domain is found at 6 to 128 (LLDKSAAYRA…ERIAAITRQP (123 aa)). Residues Asp-8 and Asp-97 each contribute to the Mg(2+) site.

This sequence belongs to the PINc/VapC protein family. Requires Mg(2+) as cofactor.

Its function is as follows. Toxic component of a type II toxin-antitoxin (TA) system. An RNase. Its toxic effect is neutralized by coexpression with cognate antitoxin VapB21. The protein is Ribonuclease VapC21 of Mycobacterium tuberculosis (strain CDC 1551 / Oshkosh).